Reading from the N-terminus, the 439-residue chain is tRNA modification GTPase MnmE (439 aa).

Positions 24, 81, and 121 each coordinate (6S)-5-formyl-5,6,7,8-tetrahydrofolate. A TrmE-type G domain is found at 218-363; the sequence is GFKVVIAGAP…LRRLIGDIVE (146 aa). Asn-228 is a K(+) binding site. GTP contacts are provided by residues 228 to 233, 247 to 253, and 272 to 275; these read NAGKSS, TEIAGTT, and DTAG. Ser-232 contributes to the Mg(2+) binding site. K(+) is bound by residues Thr-247, Ile-249, and Thr-252. Thr-253 is a Mg(2+) binding site. Lys-439 provides a ligand contact to (6S)-5-formyl-5,6,7,8-tetrahydrofolate.

This sequence belongs to the TRAFAC class TrmE-Era-EngA-EngB-Septin-like GTPase superfamily. TrmE GTPase family. As to quaternary structure, homodimer. Heterotetramer of two MnmE and two MnmG subunits. K(+) serves as cofactor.

The protein resides in the cytoplasm. Its function is as follows. Exhibits a very high intrinsic GTPase hydrolysis rate. Involved in the addition of a carboxymethylaminomethyl (cmnm) group at the wobble position (U34) of certain tRNAs, forming tRNA-cmnm(5)s(2)U34. This is tRNA modification GTPase MnmE from Rhizobium johnstonii (strain DSM 114642 / LMG 32736 / 3841) (Rhizobium leguminosarum bv. viciae).